A 314-amino-acid polypeptide reads, in one-letter code: Homoserine O-acetyltransferase (314 aa).

Cys-142 (acyl-thioester intermediate) is an active-site residue. The substrate site is built by Lys-163 and Ser-192. His-235 (proton acceptor) is an active-site residue. Glu-237 is a catalytic residue. Arg-249 serves as a coordination point for substrate.

The protein belongs to the MetA family.

The protein localises to the cytoplasm. The enzyme catalyses L-homoserine + acetyl-CoA = O-acetyl-L-homoserine + CoA. Its pathway is amino-acid biosynthesis; L-methionine biosynthesis via de novo pathway; O-acetyl-L-homoserine from L-homoserine: step 1/1. In terms of biological role, transfers an acetyl group from acetyl-CoA to L-homoserine, forming acetyl-L-homoserine. This Streptococcus mutans serotype c (strain ATCC 700610 / UA159) protein is Homoserine O-acetyltransferase.